Here is a 580-residue protein sequence, read N- to C-terminus: Acyl--CoA ligase GME11374 (580 aa).

The protein belongs to the ATP-dependent AMP-binding enzyme family.

It functions in the pathway secondary metabolite biosynthesis. Functionally, acyl--CoA ligase; part of the gene cluster that mediates the biosynthesis of dibenzodioxocinones such as pestalotiollide B, a novel class of inhibitors against cholesterol ester transfer protein (CEPT). The biosynthesis initiates from condensation of acetate and malonate units catalyzed by the non-reducing PKS pks8/GME11356. Pks8/GME11356 lacks a thioesterase (TE) domain, which is important to the cyclizing of the third ring of atrochrysone carboxylic acid, and the esterase GME11355 might play the role of TE and catalyzes the cyclization reaction of the C ring. The lactamase-like protein GME11357 (or other beta-lactamases in Pestalotiopsis microspora) probably hydrolyzes the thioester bond between the ACP of pks8/GME11356 and the intermediate to release atrochrysone carboxylic acid, which is spontaneously dehydrates to form endocrocin anthrone. Endocrocin anthrone is further converted to emodin via the endocrocin intermediate. Emodin is then oxidized by several enzymes such as the Baeyer-Villiger oxidase GME11358, the oxidoreductase GME11367, the short chain dehydrogenase/reductase GME11373, as well as by other oxidoreductases from the cluster, to modify the A and C rings and open the B ring, and finally yield monodictyphenone. The prenyltransferase GME11375 may catalyze the addition reaction between the C5 side chains and the carbon bone of dibenzodioxocinones. The remaining biochemical reactions to the final product dibenzodioxocinones should be methylation catalyzed by methyltransferase GME11366 and reduction and lactonization reaction catalyzed by a series of oxidordeuctases. This Pestalotiopsis microspora protein is Acyl--CoA ligase GME11374.